The chain runs to 605 residues: MARMRVRFPTLVLLLGILFLMAVSIGIAYGEKDVIKNHERPGEREHEERDPRQQPRPRKQEEQEREHRREEEHDRDPSRGRRESEERQEEERERRREPCREREQEQQPQHGRREEEEEEEEWQPRRLRPQSRKEEREQEQGSSSSSRKQSGYERRQYHERREQRDEKEKEQDSRSDSRRQRNPYHFSSERFQTRYRNRNGQIRVLERFDQRTNRLENLQNYRIVEFQSNPNTLILPKHSDADYILVVLNGRATITIVNPDKRQAYNLEYGDALRVPAGTTSYILNPDDNQNLRVVKLAIPINNPSNFYDFYPSSTKDQQSYFSGFSKNTLEATFNTRYEEIQRILLGNEDEQEDEEQRRGQEQSYQDEGVIVRVSKEQIQELRKHAQSSSRKGKPSESGPFNLRSNESIYSNKFGNFYEITPERNPQVQDLDISLTFTEINEGALLLPHYNSKAIFIVVVDEGEGNYELVGIRDQQRQQDEQEEEEEEVRRYSARLSEGDIFVIPAGYPISVNASSNLRLLGFGINANENQRNFLAGSEDNVISQLDREVKELTFPGSAQDVERLIKNQQQSYFANAQPQQKQQREKEGRRGRRSLISSILSTLY.

The first 30 residues, 1-30 (MARMRVRFPTLVLLLGILFLMAVSIGIAYG), serve as a signal peptide directing secretion. Residues 37–105 (NHERPGEREH…REPCREREQE (69 aa)) are compositionally biased toward basic and acidic residues. 3 disordered regions span residues 37–193 (NHER…RFQT), 346–367 (LGNE…SYQD), and 382–405 (LRKH…NLRS). The segment covering 140–149 (QGSSSSSRKQ) has biased composition (low complexity). Positions 150 to 179 (SGYERRQYHERREQRDEKEKEQDSRSDSRR) are enriched in basic and acidic residues. The 159-residue stretch at 184–342 (YHFSSERFQT…TFNTRYEEIQ (159 aa)) folds into the Cupin type-1 1 domain. One can recognise a Cupin type-1 2 domain in the interval 401–563 (FNLRSNESIY…TFPGSAQDVE (163 aa)). Asn406 and Asn513 each carry an N-linked (GlcNAc...) asparagine glycan. Positions 574–593 (FANAQPQQKQQREKEGRRGR) are disordered.

Belongs to the 7S seed storage protein family. In terms of assembly, component of globulins complexes which accumulate in seeds.

Seed storage protein. Accumulates during seed development and is hydrolyzed after germination to provide a carbon and nitrogen source for the developing seedling. The chain is Conglutin beta 7 from Lupinus angustifolius (Narrow-leaved blue lupine).